Here is a 586-residue protein sequence, read N- to C-terminus: NudC domain-containing protein 1 (586 aa).

Residues Lys-259–Pro-278 are disordered. Residues Lys-275–Val-364 form the CS domain.

It localises to the cytoplasm. Its subcellular location is the nucleus. The sequence is that of NudC domain-containing protein 1 from Xenopus tropicalis (Western clawed frog).